Here is a 507-residue protein sequence, read N- to C-terminus: MSVRRRTHSDDFSFRLERTRRPSKLDVLRESPTLPVQQGYSLTTVVLVSLVVTLVCQNVAPPAFSYLNQLIKNSPKRKIPGQSNRLNIGFISTNSPEKFAPAVQKPTFLVDPIYDEKWKGVHTAVPVMTTEPEEKRDNNHAKVKEAILAAKAASRSRRDGNLERAVTIMEHAMALAPNNPQILIEMGQIREMHNELVEADQCYVKALAYDPGNSEALVLRARTNPLVSAIDRKMLKTVHDLRNEFAHLQHSTALRRMMRETYFLYVYHTVAIEGNTLSLGQTRAILESGMVIPGKSIREHNEVIGMDAALRFLNCSLLSKEHHEISIDDILEMHRRVLGNADPVEAGKIRTTQVYVGKFTPVAPEYVLEQLADMVDWLNDESTMAMDPIERAAIAHYKLVLVHPFTDGNGRTARLLLNLIMMRSGFPPVILPVETRAEYYASLHVANLGDLRPFVRYVAKHSEASIQRYIGAMKTSSGNVINGEEPNLTAEESKVSEKIETECRAGS.

Residues 40–56 (YSLTTVVLVSLVVTLVC) form a helical membrane-spanning segment. 2 TPR repeats span residues 146-179 (AILAAKAASRSRRDGNLERAVTIMEHAMALAPNN) and 180-213 (PQILIEMGQIREMHNELVEADQCYVKALAYDPGN). An Inhibitory (S/T)XXXE(G/N) motif motif is present at residues 269–274 (TVAIEG). Glu273 lines the ATP pocket. A Fido domain is found at 325–460 (ISIDDILEMH…LRPFVRYVAK (136 aa)). Thr351 is modified (O-AMP-threonine; by autocatalysis). ATP is bound at residue 356–359 (VGKF). His403 is an active-site residue. Residues 407–414 (DGNGRTAR), 439–440 (YY), and Asn447 each bind ATP. Residue Thr475 is modified to O-AMP-threonine; by autocatalysis. Positions 482–507 (NGEEPNLTAEESKVSEKIETECRAGS) are disordered. The span at 491–507 (EESKVSEKIETECRAGS) shows a compositional bias: basic and acidic residues.

The protein belongs to the fic family. Forms homodimers; homodimerization might be required for adenylyltransferase activity.

Its subcellular location is the endoplasmic reticulum membrane. The protein resides in the nucleus membrane. The enzyme catalyses L-tyrosyl-[protein] + ATP = O-(5'-adenylyl)-L-tyrosyl-[protein] + diphosphate. The catalysed reaction is L-threonyl-[protein] + ATP = 3-O-(5'-adenylyl)-L-threonyl-[protein] + diphosphate. It catalyses the reaction 3-O-(5'-adenylyl)-L-threonyl-[protein] + H2O = L-threonyl-[protein] + AMP + H(+). The side chain of Glu-273 determines which of the two opposing activities (AMPylase or de-AMPylase) will take place. In response to endoplasmic reticulum stress, mediates de-AMPylase activity. Adenylyltransferase activity is inhibited by the inhibitory helix present at the N-terminus: Glu-273 binds ATP and competes with ATP-binding at Arg-414, thereby preventing adenylyltransferase activity. In unstressed cells, disengagement of Glu-273 promotes adenylyltransferase activity. Activation dissociates ATP-binding from Glu-273, allowing ordered binding of the entire ATP moiety with the alpha-phosphate in an orientation that is productive for accepting an incoming target hydroxyl side chain. Its function is as follows. Protein that can both mediate the addition of adenosine 5'-monophosphate (AMP) to specific residues of target proteins (AMPylation), and the removal of the same modification from target proteins (de-AMPylation), depending on the context. The side chain of Glu-273 determines which of the two opposing activities (AMPylase or de-AMPylase) will take place. Adenylyltransferase that mediates the addition of adenosine 5'-monophosphate (AMP) to specific residues of target proteins. In vivo target proteins include the heat-shock 70 family proteins hsp-1 and hsp-3 and the translation elongation factors eef-1A, eef-1G and eef-2. Can AMPylate core histone H3 in vitro. Can also act as a phosphodiesterase by mediating removal of ATP (de-AMPylation) from target proteins. Decreases susceptibility to P.aeruginosa-mediated killing and might therefore play a role in the innate immune response. This chain is Protein adenylyltransferase fic-1 (fic-1), found in Caenorhabditis briggsae.